We begin with the raw amino-acid sequence, 575 residues long: Carboxylesterase 5A (575 aa).

The N-terminal stretch at 1–27 (MSGEWGHLGQTLIWAVWVLAAATEGPA) is a signal peptide. Asparagine 82 carries N-linked (GlcNAc...) asparagine glycosylation. A disulfide bond links cysteine 94 and cysteine 121. Serine 226 acts as the Acyl-ester intermediate in catalysis. A disulfide bridge links cysteine 280 with cysteine 291. N-linked (GlcNAc...) asparagine glycosylation is present at asparagine 281. Residue glutamate 345 is the Charge relay system of the active site. N-linked (GlcNAc...) asparagine glycosylation occurs at asparagine 363. Residue histidine 454 is the Charge relay system of the active site. A glycan (N-linked (GlcNAc...) asparagine) is linked at asparagine 524.

It belongs to the type-B carboxylesterase/lipase family. Post-translationally, N-glycosylated.

The protein localises to the secreted. The enzyme catalyses a carboxylic ester + H2O = an alcohol + a carboxylate + H(+). Involved in the detoxification of xenobiotics and in the activation of ester and amide prodrugs. This Canis lupus familiaris (Dog) protein is Carboxylesterase 5A (CES5A).